The following is a 492-amino-acid chain: Beclin 1-associated autophagy-related key regulator (492 aa).

S29 carries the post-translational modification Phosphoserine. Residues 70 to 180 adopt a coiled-coil conformation; sequence RDRERFIDKK…KLGDLVEKKT (111 aa). Disordered regions lie at residues 213–232 and 411–473; these read TSGR…MTSS and GVAG…AGGM. Over residues 222 to 232 the composition is skewed to polar residues; it reads SSETDSAMTSS. S416 carries the post-translational modification Phosphoserine. Residues 424-433 show a composition bias toward acidic residues; sequence VSDEETDLGT. The residue at position 429 (T429) is a Phosphothreonine. Over residues 447-473 the composition is skewed to low complexity; that stretch reads PSQPVEVSQSQSTQASPPIASSSAGGM.

Belongs to the ATG14 family. As to quaternary structure, forms homooligomers; homo-oligomerization is essential for the roles in membrane tethering and enhancement of SNARE-mediated fusion. Component of the PI3K (PI3KC3/PI3K-III/class III phosphatidylinositol 3-kinase) complex I (PI3KC3-C1) in which the core composed of the catalytic subunit PIK3C3, the regulatory subunit PIK3R4 and BECN1 is associated with ATG14. PI3KC3-C1 displays a V-shaped architecture with PIK3R4 serving as a bridge between PIK3C3 and the ATG14:BECN1 subcomplex. PI3KC3-C1 can associate with further regulatory subunits. Interacts with PIK3CB. Interacts (via coiled-coil domain) with BECN2 (via coiled-coil domain); this interaction is tighter than BECN2 self-association. Interacts with the STX17-SNAP29 binary t-SNARE complex. Interacts with NRBF2. Interacts with PIK3C3 and BECN1; this interaction is increased in the absence of TMEM39A. Interacts with STEEP1; the interaction is required for trafficking of STING1 from the endoplasmic reticulum. Interacts with ARMC3 (via ARM domains). Post-translationally, ubiquitinated via 'Lys-6', 'Lys-11' and 'Lys-63'-linked polyubiquitin chains on multiple lysines by MARCHF7, leading to ATG14 aggregation and loss of interaction with STX17.

The protein localises to the cytoplasm. It localises to the endoplasmic reticulum membrane. The protein resides in the preautophagosomal structure membrane. In terms of biological role, required for both basal and inducible autophagy. Determines the localization of the autophagy-specific PI3-kinase complex. Plays a role in autophagosome formation and MAP1LC3/LC3 conjugation to phosphatidylethanolamine. Promotes BECN1 translocation from the trans-Golgi network to autophagosomes. Enhances PIK3C3 activity in a BECN1-dependent manner. Essential for the autophagy-dependent phosphorylation of BECN1. Stimulates the phosphorylation of BECN1, but suppresses the phosphorylation PIK3C3 by AMPK. Binds to STX17-SNAP29 binary t-SNARE complex on autophagosomes and primes it for VAMP8 interaction to promote autophagosome-endolysosome fusion. Modulates the hepatic lipid metabolism. The polypeptide is Beclin 1-associated autophagy-related key regulator (Rattus norvegicus (Rat)).